Reading from the N-terminus, the 662-residue chain is Acetyl-coenzyme A synthetase (662 aa).

CoA contacts are provided by residues 197 to 200 (RKGK) and Thr317. ATP is bound by residues 393–395 (GEP), 417–422 (DTWWQT), Asp510, and Arg525. Residue Ser533 coordinates CoA. Residue Arg536 coordinates ATP. Residues His549 and Val552 each contribute to the Mg(2+) site. At Lys623 the chain carries N6-acetyllysine.

The protein belongs to the ATP-dependent AMP-binding enzyme family. Mg(2+) is required as a cofactor. In terms of processing, acetylated. Deacetylation by the SIR2-homolog deacetylase activates the enzyme.

The enzyme catalyses acetate + ATP + CoA = acetyl-CoA + AMP + diphosphate. Catalyzes the conversion of acetate into acetyl-CoA (AcCoA), an essential intermediate at the junction of anabolic and catabolic pathways. AcsA undergoes a two-step reaction. In the first half reaction, AcsA combines acetate with ATP to form acetyl-adenylate (AcAMP) intermediate. In the second half reaction, it can then transfer the acetyl group from AcAMP to the sulfhydryl group of CoA, forming the product AcCoA. The chain is Acetyl-coenzyme A synthetase from Helicobacter pylori (strain HPAG1).